A 283-amino-acid chain; its full sequence is Non-selective voltage-gated ion channel VDAC1 (283 aa).

N-acetylalanine is present on Ala-2. Residue Lys-12 coordinates ATP. Lys-12 is covalently cross-linked (Glycyl lysine isopeptide (Lys-Gly) (interchain with G-Cter in ubiquitin)). Position 13 is a phosphoserine (Ser-13). Position 19 is a phosphothreonine (Thr-19). Lys-20 lines the ATP pocket. Lys-20 carries the N6-acetyllysine; alternate modification. Residue Lys-20 is modified to N6-succinyllysine; alternate. Lys-20 participates in a covalent cross-link: Glycyl lysine isopeptide (Lys-Gly) (interchain with G-Cter in ubiquitin); alternate. Transmembrane regions (beta stranded) follow at residues Leu-26 to Ser-35 and Leu-39 to Ala-47. Glycyl lysine isopeptide (Lys-Gly) (interchain with G-Cter in ubiquitin) cross-links involve residues Lys-53 and Lys-61. Residues Val-54–Trp-64 form a beta stranded membrane-spanning segment. At Tyr-67 the chain carries Phosphotyrosine. The next 3 membrane-spanning stretches (beta stranded) occupy residues Leu-69–Asn-76, Thr-80–Asp-89, and Leu-95–Ser-104. Phosphothreonine is present on Thr-107. Lys-109 bears the N6-acetyllysine; alternate mark. Lys-109 is covalently cross-linked (Glycyl lysine isopeptide (Lys-Gly) (interchain with G-Cter in ubiquitin); alternate). Lys-110 is covalently cross-linked (Glycyl lysine isopeptide (Lys-Gly) (interchain with G-Cter in ubiquitin)). 4 consecutive transmembrane segments (beta stranded) span residues Asn-111–Arg-120, Ile-123–Asp-130, Ser-137–Gly-145, and Leu-150–Glu-158. Lys-161 is covalently cross-linked (Glycyl lysine isopeptide (Lys-Gly) (interchain with G-Cter in ubiquitin)). 6 consecutive transmembrane segments (beta stranded) span residues Arg-163–Thr-175, Phe-178–Asn-185, Glu-189–Val-198, Leu-202–Thr-211, Arg-218–Ile-227, and Ala-231–Asn-238. Residue Ser-193 is modified to Phosphoserine; by NEK1. At Ser-240 the chain carries Phosphoserine. Leu-242–Gly-244 is an NAD(+) binding site. A beta stranded membrane pass occupies residues Leu-242–Leu-251. An N6-acetyllysine modification is found at Lys-252. Residues Gly-254 to Leu-263 traverse the membrane as a beta stranded segment. Residue Ser-260–Asp-264 coordinates NAD(+). N6-acetyllysine; alternate is present on Lys-266. A Glycyl lysine isopeptide (Lys-Gly) (interchain with G-Cter in ubiquitin); alternate cross-link involves residue Lys-266. A beta stranded transmembrane segment spans residues His-273–Gln-282. Residue Lys-274 forms a Glycyl lysine isopeptide (Lys-Gly) (interchain with G-Cter in ubiquitin) linkage.

The protein belongs to the eukaryotic mitochondrial porin family. As to quaternary structure, homodimer and homotrimer; in response to cyclic AMP or calcium; oligomerization is required for scramblase activity. Component of the mitochondrial permeability transition pore complex (mPTPC), at least composed of SPG7, VDAC1 and PPIF. Interacts with SPG7, NIPSNAP2 and SLC25A30. Interacts with hexokinases including HK1. The HK1-VDAC1 complex interacts with ATF2. Interacts with BCL2L1. Interacts with BAK1. Interacts with RTL10/BOP (via BH3 domain). Interacts with amyloid-beta and APP; induces VDAC1 dephosphorylation. Interacts with TMEM41B. Interacts with BCAP31. Interacts with HSPA9; this interaction couples ITPR1 to VDAC1. In terms of processing, phosphorylation at Ser-193 by NEK1 promotes the closed conformational state preventing excessive mitochondrial membrane permeability and subsequent apoptotic cell death after injury. Phosphorylation by the AKT-GSK3B axis stabilizes the protein probably by preventing ubiquitin-mediated proteasomal degradation. Post-translationally, ubiquitinated. Undergoes monoubiquitination and polyubiquitination by PRKN; monoubiquitination at Lys-274 inhibits apoptosis, whereas polyubiquitination leads to its degradation and promotes mitophagy. Deubiquitinated by USP30. As to expression, predominantly in brain astrocytes.

The protein localises to the mitochondrion outer membrane. It is found in the cell membrane. Its subcellular location is the membrane raft. The enzyme catalyses chloride(in) = chloride(out). It carries out the reaction K(+)(in) = K(+)(out). It catalyses the reaction ATP(in) = ATP(out). The catalysed reaction is Ca(2+)(in) = Ca(2+)(out). The enzyme catalyses Na(+)(in) = Na(+)(out). It carries out the reaction Mg(2+)(in) = Mg(2+)(out). It catalyses the reaction L-glutamate(out) = L-glutamate(in). The catalysed reaction is dopamine(out) = dopamine(in). The enzyme catalyses acetylcholine(in) = acetylcholine(out). It carries out the reaction Fe(III)-[cytochrome c](out) = Fe(III)-[cytochrome c](in). It catalyses the reaction a 1,2-diacyl-sn-glycero-3-phosphocholine(in) = a 1,2-diacyl-sn-glycero-3-phosphocholine(out). The catalysed reaction is a 1,2-diacyl-sn-glycero-3-phospho-L-serine(in) = a 1,2-diacyl-sn-glycero-3-phospho-L-serine(out). Inhibited by nitric oxide. Its function is as follows. Non-selective voltage-gated ion channel that mediates the transport of anions and cations through the mitochondrion outer membrane and plasma membrane. The channel at the outer mitochondrial membrane allows diffusion of small hydrophilic molecules; in the plasma membrane it is involved in cell volume regulation and apoptosis. It adopts an open conformation at low or zero membrane potential and a closed conformation at potentials above 30-40 mV. The open state has a weak anion selectivity whereas the closed state is cation-selective. Binds various signaling molecules, including the sphingolipid ceramide, the phospholipid phosphatidylcholine, and the sterols cholesterol and oxysterol. In depolarized mitochondria, acts downstream of PRKN and PINK1 to promote mitophagy or prevent apoptosis; polyubiquitination by PRKN promotes mitophagy, while monoubiquitination by PRKN decreases mitochondrial calcium influx which ultimately inhibits apoptosis. May participate in the formation of the permeability transition pore complex (PTPC) responsible for the release of mitochondrial products that triggers apoptosis. May mediate ATP export from cells. Part of a complex composed of HSPA9, ITPR1 and VDAC1 that regulates mitochondrial calcium-dependent apoptosis by facilitating calcium transport from the ER lumen to the mitochondria intermembrane space thus providing calcium for the downstream calcium channel MCU that directly releases it into mitochondria matrix. Mediates cytochrome c efflux. Catalyzes the scrambling of phospholipids across the outer mitochondrial membrane; the mechanism is unrelated to channel activity and is capable of translocating both anionic and zwitterionic phospholipids. This is Non-selective voltage-gated ion channel VDAC1 from Bos taurus (Bovine).